Consider the following 607-residue polypeptide: Elongation factor 4 (607 aa).

A tr-type G domain is found at 11–193 (KSIRNFSIIA…QIVAKVPAPT (183 aa)). Residues 23 to 28 (DHGKST) and 140 to 143 (NKID) each bind GTP.

The protein belongs to the TRAFAC class translation factor GTPase superfamily. Classic translation factor GTPase family. LepA subfamily.

Its subcellular location is the cell membrane. The catalysed reaction is GTP + H2O = GDP + phosphate + H(+). Functionally, required for accurate and efficient protein synthesis under certain stress conditions. May act as a fidelity factor of the translation reaction, by catalyzing a one-codon backward translocation of tRNAs on improperly translocated ribosomes. Back-translocation proceeds from a post-translocation (POST) complex to a pre-translocation (PRE) complex, thus giving elongation factor G a second chance to translocate the tRNAs correctly. Binds to ribosomes in a GTP-dependent manner. The protein is Elongation factor 4 of Exiguobacterium sibiricum (strain DSM 17290 / CCUG 55495 / CIP 109462 / JCM 13490 / 255-15).